Reading from the N-terminus, the 276-residue chain is MQVLETISDLREYRKNVKESVGFVPTMGALHKGHQSLIERSLKENFHTITSVFVNPTQFGANEDFSAYPRPLEKDLALCEKLGVDVVFVPKISEMYPYKSEQRLKLYAPKFLSHSLEGAMRKGHFDGVAQVVLRLFHLVNPTRAYFGKKDAQQLLIIQHLVKDLLLDIEIVPCEIVRDSDHLALSSRNVYLNAVERKQALAIPKALENIQQAIDMGEKACEMLKKIGLEILKNLEVDYLEFCNHKLEPLKIIEPTNTLILVAARAGKTRLLDNLWV.

An ATP-binding site is contributed by 27 to 34 (MGALHKGH). Catalysis depends on H34, which acts as the Proton donor. Q58 contacts (R)-pantoate. Q58 is a beta-alanine binding site. 147 to 150 (GKKD) is an ATP binding site. Q153 contacts (R)-pantoate. ATP contacts are provided by residues V176 and 184–187 (LSSR).

The protein belongs to the pantothenate synthetase family. Homodimer.

The protein resides in the cytoplasm. It carries out the reaction (R)-pantoate + beta-alanine + ATP = (R)-pantothenate + AMP + diphosphate + H(+). The protein operates within cofactor biosynthesis; (R)-pantothenate biosynthesis; (R)-pantothenate from (R)-pantoate and beta-alanine: step 1/1. In terms of biological role, catalyzes the condensation of pantoate with beta-alanine in an ATP-dependent reaction via a pantoyl-adenylate intermediate. The protein is Pantothenate synthetase of Helicobacter acinonychis (strain Sheeba).